The chain runs to 348 residues: Dihydroorotase (348 aa).

Residues His17 and His19 each contribute to the Zn(2+) site. Residues 19-21 and Asn45 each bind substrate; that span reads HLR. Zn(2+)-binding residues include Lys103, His140, and His178. An N6-carboxylysine modification is found at Lys103. A substrate-binding site is contributed by His140. A substrate-binding site is contributed by Leu223. A Zn(2+)-binding site is contributed by Asp251. Asp251 is a catalytic residue. The substrate site is built by His255 and Ala267.

The protein belongs to the metallo-dependent hydrolases superfamily. DHOase family. Class II DHOase subfamily. Homodimer. Zn(2+) is required as a cofactor.

It catalyses the reaction (S)-dihydroorotate + H2O = N-carbamoyl-L-aspartate + H(+). It functions in the pathway pyrimidine metabolism; UMP biosynthesis via de novo pathway; (S)-dihydroorotate from bicarbonate: step 3/3. Its function is as follows. Catalyzes the reversible cyclization of carbamoyl aspartate to dihydroorotate. The polypeptide is Dihydroorotase (Shigella dysenteriae serotype 1 (strain Sd197)).